Reading from the N-terminus, the 265-residue chain is Mlc titration factor A (265 aa).

Zn(2+) is bound by residues H111, H148, H152, and E211.

This sequence belongs to the MtfA family. Interacts with Mlc. The cofactor is Zn(2+).

It is found in the cytoplasm. Involved in the modulation of the activity of the glucose-phosphotransferase system (glucose-PTS). Interacts with the transcriptional repressor Mlc, preventing its interaction with DNA and leading to the modulation of expression of genes regulated by Mlc, including ptsG, which encodes the PTS system glucose-specific EIICB component. Functionally, shows zinc-dependent metallopeptidase activity. The protein is Mlc titration factor A of Salmonella typhi.